The chain runs to 283 residues: Mau operon transcriptional activator (283 aa).

Residues 1–58 form the HTH lysR-type domain; that stretch reads MNWDDLRVVAAINRCGSFNRAAKMLNVEETTIARRLARLEGSLGCVLFQAVDGQRRPT. Positions 18–37 form a DNA-binding region, H-T-H motif; the sequence is FNRAAKMLNVEETTIARRLA.

This sequence belongs to the LysR transcriptional regulatory family.

In terms of biological role, transcriptional activator of the mau genes involved in methylamine metabolism. In Paracoccus denitrificans, this protein is Mau operon transcriptional activator (mauR).